The chain runs to 664 residues: Protein-arginine deiminase type-3 (664 aa).

This sequence belongs to the protein arginine deiminase family. The cofactor is Ca(2+). Epidermis and hair follicles.

It localises to the cytoplasm. The catalysed reaction is L-arginyl-[protein] + H2O = L-citrullyl-[protein] + NH4(+). Its function is as follows. Catalyzes the deimination of arginine residues of proteins. In Rattus norvegicus (Rat), this protein is Protein-arginine deiminase type-3 (Padi3).